Consider the following 634-residue polypeptide: Ankyrin repeat and SOCS box protein 2 (634 aa).

The UIM domain occupies 26–45 (SEEELLQMAIEQSLADKTRG). Positions 36–82 (EQSLADKTRGPTPAEASASSQTNHQPGHFHPWTRSPSSPENPPARAP) are disordered. ANK repeat units follow at residues 104–133 (AAMDPVLKAIKEGDEEALKIMIQDGKNLAE), 137–167 (EGWLPLHEAAYYGQLGCLKVLQQAYPGTIDQ), 171–200 (QEETALYLATCREHLDCLLSLLQAGAEPDI), 204–233 (SRETPLYKACERKNAEAVRILVRYNADANH), 237–266 (RGWTALHESVSRNDLEVMEILVSGGAKVEA), 270–299 (YSITPLFVAAQSGQLEALRFLAKHGADINT), 303–332 (DSASALYEASKNEHEDVVEFLLSQGADANK), 336–365 (DGLLPLHVASKKGNYRIVQMLLPVTSRTRV), 368–397 (SGISPLHLAAERNHDAVLEALLAARFDVNA), 410–439 (RRSSALYFAVVNNNVYATELLLLAGADPNR), 440–469 (DVISPLLVAIRHGCLRTMQLLLDHGANIDA), and 476–504 (TAFPATIMFAMKCLSLLKFLMDLGCDGEP). Serine 371 is modified (phosphoserine). Positions 580–634 (EDWAVIKEKAEPPRPLAHLCRLRVRKAIGKYRIKLLDTLPLPGRLIRYLKYENTQ) constitute an SOCS box domain.

Belongs to the ankyrin SOCS box (ASB) family. Component of a probable ECS E3 ubiquitin-protein ligase complex which contains CUL5, either RBX1 or RNF7/RBX2, Elongin BC complex (ELOB and ELOC) and ASB2. Interacts with SKP2. Through its interaction with SKP2, likely to bridge the formation of dimeric E3-ubiquitin-protein ligase complexes composed of an ECS complex and an SCF(SKP2) complex. Interacts with JAK2; the interaction targets JAK2 for Notch-mediated proteasomal degradation. Interacts with TCF3/E2A; the interaction is mediated by SKP2 and targets TCF3 for Notch-mediated proteasomal degradation. In terms of assembly, interacts with DES. In terms of processing, monoubiquitinated. Post-translationally, not monoubiquitinated. Phosphorylation at Ser-371 is required for association with FLNA and subsequent FLNA degradation. In terms of tissue distribution, highest expression in muscle, heart and spleen. Highly expressed in cells of the first and second heart fields in the developing embryonic heart. At 9.5 dpc, robust expression predominantly in the left and right ventricles (RV) and to a lower extent in inflow and outflow tracts. At 10.5 and 11.5 dpc, expression is restricted to the myocardium with no expression observed in the endocardium. As to expression, not expressed in immature dendritic cells. Highly expressed in adult skeletal muscle with very low levels in adult bone marrow. Expressed in immature dendritic cells and in primary dendritic cells derived from the spleen. Highly expressed in adult bone marrow with negligible levels in adult skeletal muscle. Expressed at higher levels in T helper type 2 (Th2) cells than in regulatory T (Treg) cells, type 1 helper T (Th1) cells and T helper 17 (Th17) cells.

Its subcellular location is the cytoplasm. The protein localises to the cytoskeleton. It is found in the stress fiber. The protein resides in the myofibril. It localises to the sarcomere. Its subcellular location is the z line. It functions in the pathway protein modification; protein ubiquitination. Its function is as follows. Substrate-recognition component of a SCF-like ECS (Elongin-Cullin-SOCS-box protein) E3 ubiquitin-protein ligase complex which mediates the ubiquitination and subsequent proteasomal degradation of target proteins. Mediates Notch-induced ubiquitination and degradation of substrates including TCF3/E2A and JAK2. Required during embryonic heart development for complete heart looping. Required for cardiomyocyte differentiation. Specifically promotes the ubiquitination of SMAD9 and targets it for proteasomal degradation, leading to avoid excessive accumulation of SMAD9. Plays a role in the regulation of NK-cell migration by modulating protein levels of filamin A/FLNA via regulation of its ubiquitination and proteasome degradation. Involved in myogenic differentiation and targets filamin FLNB for proteasomal degradation but not filamin FLNA. Also targets DES for proteasomal degradation. Acts as a negative regulator of skeletal muscle mass. Functionally, targets filamins FLNA and FLNB for proteasomal degradation. This leads to enhanced adhesion of hematopoietic cells to fibronectin. Required for FLNA degradation in immature cardiomyocytes which is necessary for actin cytoskeleton remodeling, leading to proper organization of myofibrils and function of mature cardiomyocytes. Required for degradation of FLNA and FLNB in immature dendritic cells (DC) which enhances immature DC migration by promoting DC podosome formation and DC-mediated degradation of the extracellular matrix. Does not promote proteasomal degradation of tyrosine-protein kinases JAK1 or JAK2 in hematopoietic cells. The chain is Ankyrin repeat and SOCS box protein 2 from Mus musculus (Mouse).